The primary structure comprises 102 residues: Large ribosomal subunit protein bL21 (102 aa).

Belongs to the bacterial ribosomal protein bL21 family. As to quaternary structure, part of the 50S ribosomal subunit. Contacts protein L20.

Its function is as follows. This protein binds to 23S rRNA in the presence of protein L20. In Enterococcus faecalis (strain ATCC 700802 / V583), this protein is Large ribosomal subunit protein bL21.